The primary structure comprises 283 residues: Putative S-adenosyl-L-methionine-dependent methyltransferase SCO7813 (283 aa).

S-adenosyl-L-methionine is bound by residues D121 and 150-151 (DL). Positions 264 to 283 (MSTLPQHEDGPGGLISAVRR) are disordered.

The protein belongs to the UPF0677 family.

In terms of biological role, exhibits S-adenosyl-L-methionine-dependent methyltransferase activity. The protein is Putative S-adenosyl-L-methionine-dependent methyltransferase SCO7813 of Streptomyces coelicolor (strain ATCC BAA-471 / A3(2) / M145).